We begin with the raw amino-acid sequence, 186 residues long: Ribosome-recycling factor (186 aa).

It belongs to the RRF family.

It localises to the cytoplasm. Functionally, responsible for the release of ribosomes from messenger RNA at the termination of protein biosynthesis. May increase the efficiency of translation by recycling ribosomes from one round of translation to another. The polypeptide is Ribosome-recycling factor (Bordetella avium (strain 197N)).